Here is a 226-residue protein sequence, read N- to C-terminus: Cytidylate kinase (226 aa).

ATP is bound at residue 12 to 20; it reads GPSGAGKGT.

This sequence belongs to the cytidylate kinase family. Type 1 subfamily.

It is found in the cytoplasm. It catalyses the reaction CMP + ATP = CDP + ADP. The enzyme catalyses dCMP + ATP = dCDP + ADP. This Vibrio vulnificus (strain YJ016) protein is Cytidylate kinase.